The sequence spans 328 residues: Ferredoxin--NADP reductase 2 (328 aa).

The FAD site is built by glutamate 37, glutamine 45, tyrosine 50, valine 90, phenylalanine 124, aspartate 285, and threonine 325.

This sequence belongs to the ferredoxin--NADP reductase type 2 family. Homodimer. FAD serves as cofactor.

The enzyme catalyses 2 reduced [2Fe-2S]-[ferredoxin] + NADP(+) + H(+) = 2 oxidized [2Fe-2S]-[ferredoxin] + NADPH. In Latilactobacillus sakei subsp. sakei (strain 23K) (Lactobacillus sakei subsp. sakei), this protein is Ferredoxin--NADP reductase 2.